Consider the following 906-residue polypeptide: Aconitate hydratase A (906 aa).

The propeptide occupies 1 to 2 (MS). Residues C441, C507, and C510 each contribute to the [4Fe-4S] cluster site.

Belongs to the aconitase/IPM isomerase family. As to quaternary structure, monomer. [4Fe-4S] cluster serves as cofactor.

The enzyme catalyses citrate = D-threo-isocitrate. The catalysed reaction is (2S,3R)-3-hydroxybutane-1,2,3-tricarboxylate = 2-methyl-cis-aconitate + H2O. It participates in carbohydrate metabolism; tricarboxylic acid cycle; isocitrate from oxaloacetate: step 2/2. It functions in the pathway organic acid metabolism; propanoate degradation. Its function is as follows. Involved in the catabolism of short chain fatty acids (SCFA) via the tricarboxylic acid (TCA)(acetyl degradation route) and probably the 2-methylcitrate cycle I (propionate degradation route). Catalyzes the reversible isomerization of citrate to isocitrate via cis-aconitate. Could catalyze the hydration of 2-methyl-cis-aconitate to yield (2R,3S)-2-methylisocitrate. The apo form of AcnA functions as a RNA-binding regulatory protein. The polypeptide is Aconitate hydratase A (acn) (Deinococcus radiodurans (strain ATCC 13939 / DSM 20539 / JCM 16871 / CCUG 27074 / LMG 4051 / NBRC 15346 / NCIMB 9279 / VKM B-1422 / R1)).